The sequence spans 354 residues: Probable protein phosphatase 2C 27 (354 aa).

In terms of domain architecture, PPM-type phosphatase spans 54–319 (RSGDWSDIGG…DNLTAVMVSF (266 aa)). Mn(2+) contacts are provided by Asp-98, Gly-99, Asp-267, and Asp-310.

Belongs to the PP2C family. Mg(2+) serves as cofactor. Requires Mn(2+) as cofactor.

The catalysed reaction is O-phospho-L-seryl-[protein] + H2O = L-seryl-[protein] + phosphate. It catalyses the reaction O-phospho-L-threonyl-[protein] + H2O = L-threonyl-[protein] + phosphate. In Oryza sativa subsp. japonica (Rice), this protein is Probable protein phosphatase 2C 27.